The chain runs to 120 residues: MRIALIAHDNKKDELLHFIKRYEHVLATHTLCATNSTGRLIAENTNLMVHRYQSGPLGGDQQIGSEIATGNVDFVFFLRDPLTAQPHEPDITALLRICDVHNIPVATNFATAEILVESVL.

Residues 1-120 (MRIALIAHDN…TAEILVESVL (120 aa)) form the MGS-like domain. Residues His-8, Lys-12, and 54–55 (SG) each bind substrate. Catalysis depends on Asp-60, which acts as the Proton donor/acceptor. His-87 provides a ligand contact to substrate.

It belongs to the methylglyoxal synthase family.

The enzyme catalyses dihydroxyacetone phosphate = methylglyoxal + phosphate. Catalyzes the formation of methylglyoxal from dihydroxyacetone phosphate. This chain is Methylglyoxal synthase, found in Natranaerobius thermophilus (strain ATCC BAA-1301 / DSM 18059 / JW/NM-WN-LF).